The following is a 309-amino-acid chain: THAP domain-containing protein 7 (309 aa).

Residues methionine 1–phenylalanine 93 form a THAP-type zinc finger. Position 162 is a phosphoserine (serine 162). Residues serine 176 to serine 210 are disordered. Residues glutamate 198–alanine 209 show a composition bias toward pro residues. Serine 210 is modified (phosphoserine). An HCFC1-binding motif (HBM) motif is present at residues glutamate 229–tyrosine 232.

In terms of assembly, forms homodimers. Interacts with HDAC3 and nuclear hormone receptor corepressors. Interacts via HBM with HCFC1.

The protein localises to the nucleus. It is found in the chromosome. Its function is as follows. Chromatin-associated, histone tail-binding protein that represses transcription via recruitment of HDAC3 and nuclear hormone receptor corepressors. This is THAP domain-containing protein 7 (Thap7) from Mus musculus (Mouse).